The chain runs to 423 residues: UPF0229 protein VV2350 (423 aa).

The interval 81-111 (QFITGDKIERPKGGQGGGGAGDGDASADGEG) is disordered. Residues 93–102 (GGQGGGGAGD) show a composition bias toward gly residues.

This sequence belongs to the UPF0229 family.

This Vibrio vulnificus (strain YJ016) protein is UPF0229 protein VV2350.